The sequence spans 464 residues: Molybdate transporter 2 (464 aa).

Residues 8-9 (LL) carry the Tonoplast targeting signal motif. The next 9 membrane-spanning stretches (helical) occupy residues 33-53 (LSGA…LTLV), 62-82 (LIFT…PMPV), 116-136 (LLLG…LPVV), 172-192 (IWLG…IILS), 223-243 (LLSS…LCFI), 309-329 (VSIS…MPVC), 348-368 (SVIF…NSFV), 374-394 (FPIG…AMAS), and 404-424 (FIML…LGFG).

It belongs to the SLC26A/SulP transporter (TC 2.A.53) family. As to expression, expressed in leaves. Not detected in roots, shoots and seeds.

The protein localises to the vacuole membrane. Its function is as follows. Molybdate transporter required for vacuolar molybdate export during senescence. This is Molybdate transporter 2 (MOT2) from Arabidopsis thaliana (Mouse-ear cress).